Here is a 398-residue protein sequence, read N- to C-terminus: Phosphoglycerate kinase (398 aa).

Substrate contacts are provided by residues 23–25 (DFN), R38, 61–64 (HLGK), R122, and R155. ATP contacts are provided by residues K206, G297, E328, and 354–357 (GGDS).

The protein belongs to the phosphoglycerate kinase family. As to quaternary structure, monomer.

The protein resides in the cytoplasm. It catalyses the reaction (2R)-3-phosphoglycerate + ATP = (2R)-3-phospho-glyceroyl phosphate + ADP. It participates in carbohydrate degradation; glycolysis; pyruvate from D-glyceraldehyde 3-phosphate: step 2/5. The sequence is that of Phosphoglycerate kinase from Clostridium kluyveri (strain NBRC 12016).